The chain runs to 591 residues: MDDLDALLADLESTTSHISKRPVFLSEETPYSYPTGNHTYQEIAVPPPVPPPPSSEALNGTILDPLDQWQPSSSRFIHQQPQSSSPVYGSSAKTSSVSNPQDSVGSPCSRVGEEEHVYSFPNKQKSAEPSPTVMSTSLGSNLSELDRLLLELNAVQHNPPGFPADEANSSPPLPGALSPLYGVPETNSPLGGKAGPLTKEKPKRNGGRGLEDVRPSVESLLDELESSVPSPVPAITVNQGEMSSPQRVTSTQQQTRISASSATRELDELMASLSDFKIQGLEQRADGERCWAAGWPRDGGRSSPGGQDEGGFMAQGKTGSSSPPGGPPKPGSQLDSMLGSLQSDLNKLGVATVAKGVCGACKKPIAGQVVTAMGKTWHPEHFVCTHCQEEIGSRNFFERDGQPYCEKDYHNLFSPRCYYCNGPILDKVVTALDRTWHPEHFFCAQCGAFFGPEGFHEKDGKAYCRKDYFDMFAPKCGGCARAILENYISALNTLWHPECFVCRECFTPFVNGSFFEHDGQPYCEVHYHERRGSLCSGCQKPITGRCITAMAKKFHPEHFVCAFCLKQLNKGTFKEQNDKPYCQNCFLKLFC.

Met1 is modified (N-acetylmethionine). Asp2 carries the N-acetylserine modification. The short motif at 3-15 (DLDALLADLESTT) is the LD motif 1 element. The disordered stretch occupies residues 17–138 (HISKRPVFLS…PSPTVMSTSL (122 aa)). A Phosphotyrosine; by PTK6 modification is found at Tyr31. Residues 45 to 54 (VPPPVPPPPS) are compositionally biased toward pro residues. Positions 69 to 106 (WQPSSSRFIHQQPQSSSPVYGSSAKTSSVSNPQDSVGS) are enriched in polar residues. Phosphoserine is present on residues Ser83 and Ser85. Phosphotyrosine is present on Tyr88. The residue at position 106 (Ser106) is a Phosphoserine. Residue Tyr118 is modified to Phosphotyrosine; by PTK6. Phosphoserine is present on residues Ser119, Ser126, and Ser130. A compositionally biased stretch (polar residues) spans 121–137 (PNKQKSAEPSPTVMSTS). Thr132 carries the phosphothreonine modification. Phosphoserine is present on residues Ser137, Ser140, and Ser143. The short motif at 144 to 156 (ELDRLLLELNAVQ) is the LD motif 2 element. Positions 159-260 (PPGFPADEAN…TQQQTRISAS (102 aa)) are disordered. Tyr181 is modified (phosphotyrosine). Residues 216-228 (SVESLLDELESSV) carry the LD motif 3 motif. At Ser230 the chain carries Phosphoserine. Residues 236–260 (TVNQGEMSSPQRVTSTQQQTRISAS) are compositionally biased toward polar residues. Position 244 is a phosphoserine; by CDK5 (Ser244). A Phosphoserine; by SLK modification is found at Ser250. Phosphoserine occurs at positions 258, 261, 272, 303, 322, 332, and 340. The tract at residues 262–315 (ATRELDELMASLSDFKIQGLEQRADGERCWAAGWPRDGGRSSPGGQDEGGFMAQ) is required for binding to PARVA and ILK. The LD motif 4 signature appears at 265–276 (ELDELMASLSDF). The disordered stretch occupies residues 291–335 (WAAGWPRDGGRSSPGGQDEGGFMAQGKTGSSSPPGGPPKPGSQLD). The LD motif 5 motif lies at 333 to 345 (QLDSMLGSLQSDL). LIM zinc-binding domains are found at residues 356–415 (GVCG…LFSP), 416–473 (RCYY…DMFA), 474–533 (PKCG…RRGS), and 534–591 (LCSG…KLFC). Ser533 carries the phosphoserine modification.

Belongs to the paxillin family. In terms of assembly, interacts in vitro with VCL/vinculin as well as to the SH3 domain of SRC and, when tyrosine phosphorylated, to the SH2 domain of CRK. Interacts with GIT1. Interacts with NUDT16L1/SDOS. Interacts with PTK2/FAK1. Interacts with PTK2B/PYK2. Interacts with ASAP2. Interacts with unphosphorylated ITGA4. Interacts with RNF5. Interacts with PDCD10. Interacts with NEK3, the interaction is prolactin-dependent. Interacts with PTK6. Interacts with TGFB1I1. Interacts with SORBS1. Interacts with PARVB. Interacts (via LD motif 4) with PARVA/PARVIN. Interacts (via LD motif 4) with ILK. Interacts (via cytoplasmic domain) with CEACAM1; the interaction is phosphotyrosyl-dependent. Interacts with LIMA1; this complex stabilizes actin dynamics. Interacts with CD36 (via C-terminus). Interacts with TRIM15. Interacts with PAK4; PAK4 acts as a scaffold to suppport PAXI phosphorylation at Ser-272. As to quaternary structure, interacts strongly with PTK2/FAK1 and weakly with VCL/vinculin. Interacts strongly with VCL/vinculin but only weakly with PTK2/FAK1. In terms of processing, phosphorylated by MAPK1/ERK2. Phosphorylated on tyrosine residues during integrin-mediated cell adhesion, embryonic development, fibroblast transformation and following stimulation of cells by mitogens. Phosphorylation at Ser-244 by CDK5 reduces its interaction with PTK2/FAK1 in matrix-cell focal adhesions (MCFA) during oligodendrocytes (OLs) differentiation. Phosphorylation at Tyr-31 and Tyr-118 by PTK6 promote the activation of RAC1 via CRK/CrKII, thereby promoting migration and invasion. Phosphorylation at Ser-250 by SLK is required for PXN redistribution and cell motility. Phosphorylation at Ser-272 promotes focal adhesion disassembly during cell migration.

The protein resides in the cytoplasm. It is found in the cytoskeleton. The protein localises to the cell junction. It localises to the focal adhesion. Its subcellular location is the cell cortex. Cytoskeletal protein involved in actin-membrane attachment at sites of cell adhesion to the extracellular matrix (focal adhesion). Recruits other proteins such as TRIM15 to focal adhesion. The polypeptide is Paxillin (Homo sapiens (Human)).